Here is a 470-residue protein sequence, read N- to C-terminus: tRNA modification GTPase MnmE (470 aa).

(6S)-5-formyl-5,6,7,8-tetrahydrofolate is bound by residues arginine 30, glutamate 92, and arginine 132. The 167-residue stretch at 227-393 (GLQVALVGRP…LIKAVLKTCG (167 aa)) folds into the TrmE-type G domain. Position 237 (asparagine 237) interacts with K(+). Residues 237 to 242 (NVGKSS), 256 to 262 (TDLPGTT), 281 to 284 (DTAG), and 342 to 345 (NKAD) contribute to the GTP site. Serine 241 contributes to the Mg(2+) binding site. Positions 256, 258, and 261 each coordinate K(+). Position 262 (threonine 262) interacts with Mg(2+). Position 470 (lysine 470) interacts with (6S)-5-formyl-5,6,7,8-tetrahydrofolate.

It belongs to the TRAFAC class TrmE-Era-EngA-EngB-Septin-like GTPase superfamily. TrmE GTPase family. In terms of assembly, homodimer. Heterotetramer of two MnmE and two MnmG subunits. K(+) is required as a cofactor.

It localises to the cytoplasm. Functionally, exhibits a very high intrinsic GTPase hydrolysis rate. Involved in the addition of a carboxymethylaminomethyl (cmnm) group at the wobble position (U34) of certain tRNAs, forming tRNA-cmnm(5)s(2)U34. This Prochlorococcus marinus (strain MIT 9313) protein is tRNA modification GTPase MnmE.